Consider the following 328-residue polypeptide: MTAMTNIYETTIIGGGPAGLYAAFQAGLYGLNGQLLEGDQQFGGKVATYAERVIHDIGGMPNITGQDLIQNLTAQAAFYDTPLRTQTLVTDVKYLADQDYYQIDTPDDRYYSQTLILAMGGGVVRPKQLRLFEEQTFENVHYAPANPEDYRDQRVVLIGPGYNLMELAPHLLATAKSVVWLTTKRPFVDEAAEKAFLTAYPQIDYYCQPLASYQQVDQQVTSITLADQTQITFDQAVVSLGYRRSLQTLDQWQLSAEQIEERPDIWVIGNQIPDRAGISLLTSAFQDGITAVTEIVAQLKPTAKTPMVTTHNPVFQADTKAYWQERLR.

Residues Glu-37, Lys-45, Tyr-49, Val-89, and Thr-310 each contribute to the FAD site.

The protein belongs to the ferredoxin--NADP reductase type 2 family. As to quaternary structure, homodimer. FAD serves as cofactor.

It carries out the reaction 2 reduced [2Fe-2S]-[ferredoxin] + NADP(+) + H(+) = 2 oxidized [2Fe-2S]-[ferredoxin] + NADPH. The chain is Ferredoxin--NADP reductase 1 from Latilactobacillus sakei subsp. sakei (strain 23K) (Lactobacillus sakei subsp. sakei).